The primary structure comprises 308 residues: Beta-carotene hydroxylase 2, chloroplastic (308 aa).

The N-terminal 59 residues, 1-59 (MAAARISFSSTSRTSYYRHSPFLGPKPTPTTPSVYPITPFSPNLGSILRCRRRPSFTVC), are a transit peptide targeting the chloroplast. 2 helical membrane passes run 105–125 (YLVA…MAVY) and 139–159 (FSEM…MEFW). The region spanning 152–279 (AAVGMEFWAR…KFNGVPYGLF (128 aa)) is the Fatty acid hydroxylase domain. A Histidine box-1 motif is present at residues 164-169 (HKALWH). The short motif at 176–180 (HESHH) is the Histidine box-2 element. The next 2 helical transmembrane spans lie at 191–211 (DVFA…GFFH) and 215–235 (IPGL…AYMF). The Histidine box-3 motif lies at 237 to 242 (HDGLVH). A Histidine box-4 motif is present at residues 263–267 (HSLHH).

Belongs to the sterol desaturase family.

It localises to the plastid. The protein localises to the chloroplast membrane. It catalyses the reaction all-trans-beta-carotene + 4 reduced [2Fe-2S]-[ferredoxin] + 2 O2 + 4 H(+) = all-trans-zeaxanthin + 4 oxidized [2Fe-2S]-[ferredoxin] + 2 H2O. The enzyme catalyses all-trans-beta-carotene + 2 reduced [2Fe-2S]-[ferredoxin] + O2 + 2 H(+) = beta-cryptoxanthin + 2 oxidized [2Fe-2S]-[ferredoxin] + H2O. It carries out the reaction beta-cryptoxanthin + 2 reduced [2Fe-2S]-[ferredoxin] + O2 + 2 H(+) = all-trans-zeaxanthin + 2 oxidized [2Fe-2S]-[ferredoxin] + H2O. Inhibited by o-phenanthroline and 8-hydroxyquinoline. In terms of biological role, nonheme diiron monooxygenase involved in the biosynthesis of xanthophylls. Specific for beta-ring hydroxylations of beta-carotene. Produces beta-cryptoxanthin and zeaxanthin. Uses ferredoxin as an electron donor. This chain is Beta-carotene hydroxylase 2, chloroplastic, found in Capsicum annuum (Capsicum pepper).